A 275-amino-acid polypeptide reads, in one-letter code: Putative protein A464R (275 aa).

The RNase III domain occupies 51 to 175; that stretch reads KEDVEYLIGM…LMGAIYFDLG (125 aa). The region spanning 201–269 is the DRBM domain; the sequence is NYKDRLLKHT…SKIALHTMGV (69 aa).

It belongs to the ribonuclease III family.

The sequence is that of Putative protein A464R from Chlorella (PBCV-1).